A 792-amino-acid chain; its full sequence is Replication factor A (792 aa).

DNA-binding regions (OB) lie at residues 81 to 140, 192 to 273, 301 to 365, and 422 to 494; these read VTGR…IRIK, VNVI…TSLT, VTVM…ANVE, and VDVV…VELS. A C4-type zinc finger spans residues 678–696; that stretch reads CPSCNERLDLSDENICNFC.

In terms of assembly, probably binds DNA polymerase PolB. Binds helicase Hel308, in presence and absence of DNA.

Functionally, inhibits DNA polymerase activity of PolB, which can be overcome by RFC and PNCA. Stimulates 3'-to 5'-exonuclease activity of PolB at 30 degrees Celsius, but has no effect at 50 or 70 degrees Celsius. Bind ssDNA and replication forks; replication forks structures bind both Hel308 and this protein. Has no effect on helicase activity of Hel308; may help target the helicase to DNA substrates that require DNA re-modeling. This is Replication factor A (rpa) from Methanothermobacter thermautotrophicus (strain ATCC 29096 / DSM 1053 / JCM 10044 / NBRC 100330 / Delta H) (Methanobacterium thermoautotrophicum).